Here is a 170-residue protein sequence, read N- to C-terminus: Photosystem II extrinsic protein V (170 aa).

An N-terminal signal peptide occupies residues 1–33; it reads MVSVFSSLRQSFKGLLVLVPVLIGLAFISPAEA. Positions 70, 73, 74, and 137 each coordinate heme c.

This sequence belongs to the cytochrome c family. PsbV subfamily. In terms of assembly, PSII is composed of 1 copy each of membrane proteins PsbA, PsbB, PsbC, PsbD, PsbE, PsbF, PsbH, PsbI, PsbJ, PsbK, PsbL, PsbM, PsbT, PsbX, PsbY, PsbZ, Psb30/Ycf12, peripheral proteins PsbO, CyanoQ (PsbQ), PsbU, PsbV and a large number of cofactors. It forms dimeric complexes. It depends on heme c as a cofactor.

Its subcellular location is the cellular thylakoid membrane. In terms of biological role, one of the extrinsic, lumenal subunits of photosystem II (PSII). PSII is a light-driven water plastoquinone oxidoreductase, using light energy to abstract electrons from H(2)O, generating a proton gradient subsequently used for ATP formation. The extrinsic proteins stabilize the structure of photosystem II oxygen-evolving complex (OEC), the ion environment of oxygen evolution and protect the OEC against heat-induced inactivation. Low-potential cytochrome c that plays a role in the OEC of PSII. This chain is Photosystem II extrinsic protein V, found in Synechococcus sp. (strain CC9902).